Consider the following 118-residue polypeptide: Large ribosomal subunit protein uL22 (118 aa).

Belongs to the universal ribosomal protein uL22 family. Part of the 50S ribosomal subunit.

This protein binds specifically to 23S rRNA; its binding is stimulated by other ribosomal proteins, e.g. L4, L17, and L20. It is important during the early stages of 50S assembly. It makes multiple contacts with different domains of the 23S rRNA in the assembled 50S subunit and ribosome. Its function is as follows. The globular domain of the protein is located near the polypeptide exit tunnel on the outside of the subunit, while an extended beta-hairpin is found that lines the wall of the exit tunnel in the center of the 70S ribosome. This Listeria innocua serovar 6a (strain ATCC BAA-680 / CLIP 11262) protein is Large ribosomal subunit protein uL22.